A 464-amino-acid polypeptide reads, in one-letter code: Sushi repeat-containing protein SRPX (464 aa).

A signal peptide spans 1 to 30; it reads MGSPAHRPALLLLLPPLLLLLLLRVPPSRS. Serine 34 is a glycosylation site (O-linked (Xyl...) (chondroitin sulfate) serine). Disulfide bonds link cysteine 57–cysteine 85, cysteine 69–cysteine 103, cysteine 89–cysteine 115, cysteine 120–cysteine 161, and cysteine 147–cysteine 174. Sushi domains follow at residues 57–117 and 118–176; these read CSPI…ICKQ and KRCP…SCVD. The HYR domain maps to 177–259; that stretch reads MEPPRIKCPS…TCKFRVKVRV (83 aa). The 60-residue stretch at 260 to 319 folds into the Sushi 3 domain; that stretch reads KRCGKLNAPENGYMKCSSDGDNYGATCEFSCIGGYELQGSPARVCQSNLAWSGTEPTCAA. Disulfide bonds link cysteine 262–cysteine 304 and cysteine 290–cysteine 317.

As to expression, detected in fibroblasts (at protein level). Retina and heart; less in placenta, pancreas, lung, liver, skeletal muscle, kidney and brain.

It localises to the cell surface. May be involved in phagocytosis during disk shedding, cell adhesion to cells other than the pigment epithelium or signal transduction. This is Sushi repeat-containing protein SRPX (SRPX) from Homo sapiens (Human).